A 343-amino-acid chain; its full sequence is Cilia- and flagella-associated protein 36 (343 aa).

Residues Ser-85 and Ser-147 each carry the phosphoserine modification. Residues 147–181 adopt a coiled-coil conformation; that stretch reads SDLEQEEMKILREVLRKSKEEYDQEEERKRKKQSS. The interval 165–191 is disordered; the sequence is KEEYDQEEERKRKKQSSEGKMEEPPIY. Ser-201 bears the Phosphoserine mark. The interval 286-323 is disordered; the sequence is SMRKDMRAKQIQNTEQKGKPTREAEEMTEKPEMTAEEK. Positions 301-323 are enriched in basic and acidic residues; it reads QKGKPTREAEEMTEKPEMTAEEK.

It belongs to the CFAP36 family. Interacts with ARL3. Widely expressed (at protein level).

It localises to the nucleus. Its subcellular location is the cytoplasm. It is found in the cell projection. The protein resides in the cilium. The protein localises to the flagellum. Functionally, may act as an effector for ARL3. The polypeptide is Cilia- and flagella-associated protein 36 (Rattus norvegicus (Rat)).